The following is a 318-amino-acid chain: MSTHVAGLGLDKMKLGNPQSFLDQEEADDQQLLEPEAWKTYTERRNALREFLTSDLSPHLLKRHHARMQLLRKCSYYIEVLPKHLALGDQNPLVLPSALFQLIDPWKFQRMKKVGTAQTKIQLLLLGDLLEQLDHGRAELDALLRSPDPRPFLADWALVERRLADVSAVMDSFLTMMVPGRLHVKHRLVSDVSATKIPHIWLMLSTKMPVVFDRKASAAHQDWARLRWFVTIQPATSEQYELRFRLLDPRTQQECAQCGVIPVAACTFDVRNLLPNRSYKFTIKRAETSTLVYEPWRDSLTLHTKPEPLEGPALSHSV.

Residues Val-210–Glu-307 form the Fibronectin type-III domain.

This Homo sapiens (Human) protein is Fibronectin type III domain-containing protein 11 (FNDC11).